The chain runs to 295 residues: 4-diphosphocytidyl-2-C-methyl-D-erythritol kinase (295 aa).

K18 is a catalytic residue. Position 101–111 (101–111) interacts with ATP; the sequence is PMGGGIGGGSS. D143 is a catalytic residue.

The protein belongs to the GHMP kinase family. IspE subfamily.

The enzyme catalyses 4-CDP-2-C-methyl-D-erythritol + ATP = 4-CDP-2-C-methyl-D-erythritol 2-phosphate + ADP + H(+). The protein operates within isoprenoid biosynthesis; isopentenyl diphosphate biosynthesis via DXP pathway; isopentenyl diphosphate from 1-deoxy-D-xylulose 5-phosphate: step 3/6. Functionally, catalyzes the phosphorylation of the position 2 hydroxy group of 4-diphosphocytidyl-2C-methyl-D-erythritol. This is 4-diphosphocytidyl-2-C-methyl-D-erythritol kinase from Vibrio cholerae serotype O1 (strain ATCC 39315 / El Tor Inaba N16961).